A 208-amino-acid polypeptide reads, in one-letter code: Ribosomal RNA large subunit methyltransferase E (208 aa).

S-adenosyl-L-methionine contacts are provided by glycine 62, tryptophan 64, aspartate 82, aspartate 98, and aspartate 123. Lysine 163 serves as the catalytic Proton acceptor.

Belongs to the class I-like SAM-binding methyltransferase superfamily. RNA methyltransferase RlmE family.

The protein localises to the cytoplasm. It carries out the reaction uridine(2552) in 23S rRNA + S-adenosyl-L-methionine = 2'-O-methyluridine(2552) in 23S rRNA + S-adenosyl-L-homocysteine + H(+). Specifically methylates the uridine in position 2552 of 23S rRNA at the 2'-O position of the ribose in the fully assembled 50S ribosomal subunit. This chain is Ribosomal RNA large subunit methyltransferase E, found in Idiomarina loihiensis (strain ATCC BAA-735 / DSM 15497 / L2-TR).